The primary structure comprises 779 residues: Subtilisin-like protease SBT3.18 (779 aa).

The signal sequence occupies residues 1 to 21; sequence MYFWVMFFTLMIKVKLYITNG. A propeptide spans 22-109 (activation peptide); it reads DIFQNRPTVY…VFKSKSLKLH (88 aa). The Inhibitor I9 domain maps to 30-109; the sequence is VYVVYLGANR…VFKSKSLKLH (80 aa). A glycan (N-linked (GlcNAc...) asparagine) is linked at N84. The Peptidase S8 domain maps to 113-621; the sequence is SWDFLGLAVD…AGHINPLKAM (509 aa). Catalysis depends on charge relay system residues D144 and H221. Residues N236 and N406 are each glycosylated (N-linked (GlcNAc...) asparagine). Catalysis depends on S553, which acts as the Charge relay system.

It belongs to the peptidase S8 family.

The protein localises to the secreted. This chain is Subtilisin-like protease SBT3.18, found in Arabidopsis thaliana (Mouse-ear cress).